Consider the following 176-residue polypeptide: Nucleoside triphosphate/diphosphate phosphatase (176 aa).

Arg23 (proton donor) is an active-site residue. Asn87, Asp103, Asp105, Asp107, Asp120, and Glu123 together coordinate Mg(2+).

This sequence belongs to the Ntdp family. Requires Mg(2+) as cofactor.

It carries out the reaction a ribonucleoside 5'-triphosphate + H2O = a ribonucleoside 5'-diphosphate + phosphate + H(+). It catalyses the reaction a ribonucleoside 5'-diphosphate + H2O = a ribonucleoside 5'-phosphate + phosphate + H(+). In terms of biological role, has nucleoside phosphatase activity towards nucleoside triphosphates and nucleoside diphosphates. This chain is Nucleoside triphosphate/diphosphate phosphatase (ygaC), found in Bacillus subtilis (strain 168).